Here is a 153-residue protein sequence, read N- to C-terminus: UPF0127 protein TGAM_1372 (153 aa).

It belongs to the UPF0127 family.

The polypeptide is UPF0127 protein TGAM_1372 (Thermococcus gammatolerans (strain DSM 15229 / JCM 11827 / EJ3)).